We begin with the raw amino-acid sequence, 313 residues long: Aspartate carbamoyltransferase catalytic subunit (313 aa).

Residues Arg53 and Thr54 each coordinate carbamoyl phosphate. L-aspartate is bound at residue Lys82. Carbamoyl phosphate contacts are provided by Arg103, His131, and Gln134. 2 residues coordinate L-aspartate: Arg163 and Arg224. Carbamoyl phosphate is bound by residues Leu263 and Pro264.

This sequence belongs to the aspartate/ornithine carbamoyltransferase superfamily. ATCase family. As to quaternary structure, heterooligomer of catalytic and regulatory chains.

It catalyses the reaction carbamoyl phosphate + L-aspartate = N-carbamoyl-L-aspartate + phosphate + H(+). It participates in pyrimidine metabolism; UMP biosynthesis via de novo pathway; (S)-dihydroorotate from bicarbonate: step 2/3. Functionally, catalyzes the condensation of carbamoyl phosphate and aspartate to form carbamoyl aspartate and inorganic phosphate, the committed step in the de novo pyrimidine nucleotide biosynthesis pathway. This Halorubrum lacusprofundi (strain ATCC 49239 / DSM 5036 / JCM 8891 / ACAM 34) protein is Aspartate carbamoyltransferase catalytic subunit.